The chain runs to 209 residues: Tektin bundle-interacting protein 1 (209 aa).

In terms of assembly, microtubule inner protein component of sperm flagellar doublet microtubules.

The protein localises to the cytoplasm. Its subcellular location is the cytoskeleton. It localises to the cilium axoneme. The protein resides in the flagellum axoneme. Functionally, microtubule inner protein (MIP) part of the dynein-decorated doublet microtubules (DMTs) in cilia axoneme, which is required for motile cilia beating. Located at the center of the tektin bundle where may function to recruit tektins or stabilize the bundle. The polypeptide is Tektin bundle-interacting protein 1 (TEKTIP1) (Macaca fascicularis (Crab-eating macaque)).